The primary structure comprises 107 residues: Multidrug resistance protein mmr (107 aa).

The next 4 helical transmembrane spans lie at 2 to 19 (IYLY…ATSL), 29 to 51 (LWPT…LSIS), 58 to 80 (VAYA…LFLG), and 84 to 106 (SVMK…LAGA).

It belongs to the drug/metabolite transporter (DMT) superfamily. Small multidrug resistance (SMR) (TC 2.A.7.1) family. Mmr subfamily.

It is found in the cell membrane. Functionally, multidrug efflux pump. Confers resistance to tetraphenylphosphonium (TPP), erythromycin, ethidium bromide, acriflavine, safranin O and pyronin Y. This Mycobacterium bovis (strain ATCC BAA-935 / AF2122/97) protein is Multidrug resistance protein mmr (mmr).